A 145-amino-acid chain; its full sequence is Ribosomal RNA large subunit methyltransferase H (145 aa).

S-adenosyl-L-methionine-binding positions include L62, G94, and 113-118; that span reads LGQLTL.

It belongs to the RNA methyltransferase RlmH family. Homodimer.

It is found in the cytoplasm. The catalysed reaction is pseudouridine(1915) in 23S rRNA + S-adenosyl-L-methionine = N(3)-methylpseudouridine(1915) in 23S rRNA + S-adenosyl-L-homocysteine + H(+). Its function is as follows. Specifically methylates the pseudouridine at position 1915 (m3Psi1915) in 23S rRNA. The chain is Ribosomal RNA large subunit methyltransferase H from Deinococcus deserti (strain DSM 17065 / CIP 109153 / LMG 22923 / VCD115).